We begin with the raw amino-acid sequence, 112 residues long: Putative pterin-4-alpha-carbinolamine dehydratase (112 aa).

It belongs to the pterin-4-alpha-carbinolamine dehydratase family.

The enzyme catalyses (4aS,6R)-4a-hydroxy-L-erythro-5,6,7,8-tetrahydrobiopterin = (6R)-L-erythro-6,7-dihydrobiopterin + H2O. This is Putative pterin-4-alpha-carbinolamine dehydratase from Shewanella baltica (strain OS155 / ATCC BAA-1091).